A 370-amino-acid polypeptide reads, in one-letter code: Small ribosomal subunit biogenesis GTPase RsgA (370 aa).

The CP-type G domain occupies 97–255; it reads QTQLDRPPIA…LADTPGFNQP (159 aa). Residues 146-149 and 197-205 each bind GTP; these read NKSD and GPSGVGKSS. Residues Cys280, Cys285, His287, and Cys293 each contribute to the Zn(2+) site. Positions 328-370 are disordered; that stretch reads TLKLKTKGKGQSQYEPKLESKKYRRTSRRTQVQGLQDLYQEEE.

The protein belongs to the TRAFAC class YlqF/YawG GTPase family. RsgA subfamily. Monomer. Associates with 30S ribosomal subunit, binds 16S rRNA. Requires Zn(2+) as cofactor.

Its subcellular location is the cytoplasm. In terms of biological role, one of several proteins that assist in the late maturation steps of the functional core of the 30S ribosomal subunit. Helps release RbfA from mature subunits. May play a role in the assembly of ribosomal proteins into the subunit. Circularly permuted GTPase that catalyzes slow GTP hydrolysis, GTPase activity is stimulated by the 30S ribosomal subunit. The protein is Small ribosomal subunit biogenesis GTPase RsgA of Trichormus variabilis (strain ATCC 29413 / PCC 7937) (Anabaena variabilis).